A 202-amino-acid polypeptide reads, in one-letter code: MNLLRKIVKNRRDEDTQKSSPASAPLDDDDLWLPPPEYVPLKELTGKKNMRNFCINGRVKVCSPNGYSFRILRHILKSFDEIYSGNHRMIGLVKVVIGLALSGSPVPEGLNWVYKLRRTFIFQWADSRGPLEGEELEYSQEITWDDDTEFVGLQIRVIAKQCHIQGRVWCINMNPRACQLWSDMSLQTQRSEEDKDSSLLLE.

The disordered stretch occupies residues 9–31 (KNRRDEDTQKSSPASAPLDDDDL). The PPXY motif motif lies at 35-38 (PPEY). The segment at 115–151 (KLRRTFIFQWADSRGPLEGEELEYSQEITWDDDTEFV) is essential for glycoprotein binding.

The protein belongs to the lyssavirus matrix protein family. As to quaternary structure, homomultimer. Interacts with nucleoprotein and with the cytoplasmic domain of glycoprotein. Interacts with host ATP6V1A; this interaction plays an important role in virion uncoating after viral entry.

Its subcellular location is the virion membrane. It localises to the host endomembrane system. The protein localises to the host cytoplasm. In terms of biological role, plays a major role in assembly, budding and uncoating of virion after membrane fusion. Completely covers the ribonucleoprotein coil and keep it in condensed bullet-shaped form. Inhibits viral transcription and stimulates replication. Plays a major role in early induction of TRAIL-mediated apoptosis in infected neurons. Inhibits the integrated stress response (ISR) in the infected cell by blocking the formation of stress granules. This chain is Matrix protein (M), found in Rabies virus (strain SAD B19) (RABV).